The primary structure comprises 345 residues: NADH-ubiquinone oxidoreductase chain 2 (345 aa).

10 helical membrane passes run 1–21 (MNPL…ILTT), 26–46 (WVSA…IISM), 60–80 (FLIQ…NAHL), 96–115 (IALT…HFWL), 122–144 (VPIL…LLIM), 148–170 (LIPT…LGGL), 201–223 (TLLN…HLTM), 242–262 (SLFL…GFIP), 274–294 (NLTP…MFYL), and 323–343 (TSTL…TPTL).

It belongs to the complex I subunit 2 family.

It is found in the mitochondrion inner membrane. The catalysed reaction is a ubiquinone + NADH + 5 H(+)(in) = a ubiquinol + NAD(+) + 4 H(+)(out). Core subunit of the mitochondrial membrane respiratory chain NADH dehydrogenase (Complex I) that is believed to belong to the minimal assembly required for catalysis. Complex I functions in the transfer of electrons from NADH to the respiratory chain. The immediate electron acceptor for the enzyme is believed to be ubiquinone. This is NADH-ubiquinone oxidoreductase chain 2 (MT-ND2) from Varanus nebulosus (Clouded monitor).